The following is a 294-amino-acid chain: 33 kDa chaperonin (294 aa).

2 disulfide bridges follow: Cys-239/Cys-241 and Cys-272/Cys-275.

The protein belongs to the HSP33 family. In terms of processing, under oxidizing conditions two disulfide bonds are formed involving the reactive cysteines. Under reducing conditions zinc is bound to the reactive cysteines and the protein is inactive.

It localises to the cytoplasm. Functionally, redox regulated molecular chaperone. Protects both thermally unfolding and oxidatively damaged proteins from irreversible aggregation. Plays an important role in the bacterial defense system toward oxidative stress. The polypeptide is 33 kDa chaperonin (Lacticaseibacillus casei (strain BL23) (Lactobacillus casei)).